Reading from the N-terminus, the 148-residue chain is Large ribosomal subunit protein uL22 (148 aa).

This sequence belongs to the universal ribosomal protein uL22 family. Part of the 50S ribosomal subunit.

This protein binds specifically to 23S rRNA. It makes multiple contacts with different domains of the 23S rRNA in the assembled 50S subunit and ribosome. Functionally, the globular domain of the protein is located near the polypeptide exit tunnel on the outside of the subunit, while an extended beta-hairpin is found that lines the wall of the exit tunnel in the center of the 70S ribosome. The polypeptide is Large ribosomal subunit protein uL22 (Thermoplasma volcanium (strain ATCC 51530 / DSM 4299 / JCM 9571 / NBRC 15438 / GSS1)).